We begin with the raw amino-acid sequence, 224 residues long: LOB domain-containing protein 15 (224 aa).

The LOB domain occupies 44–145; the sequence is TPCAACKLLR…AELTAVRSEI (102 aa). A disordered region spans residues 171–224; the sequence is SGGVSVIAPPPQRPTTPPQPTTAHPPSPSSCVFSQPTTRDLEYGNIESENNYFG. Residues 178–198 show a composition bias toward pro residues; the sequence is APPPQRPTTPPQPTTAHPPSP.

This sequence belongs to the LOB domain-containing protein family. In terms of tissue distribution, expressed in young shoots, roots, stems, leaves and flowers.

This is LOB domain-containing protein 15 (LBD15) from Arabidopsis thaliana (Mouse-ear cress).